Reading from the N-terminus, the 805-residue chain is Chloride channel protein (805 aa).

Over Met-1–Leu-48 the chain is Cytoplasmic. A run of 2 helical transmembrane segments spans residues Gly-49–Leu-86 and Leu-93–Val-116. Positions Gly-122–Pro-126 match the Selectivity filter part_1 motif. Chloride is bound at residue Ser-123. An intramembrane region (helical) is located at residues Ile-125–Ile-132. Transmembrane regions (helical) follow at residues Leu-141 to Ala-159 and Glu-166 to Leu-184. The Selectivity filter part_2 signature appears at Gly-164 to Pro-168. 2 consecutive intramembrane regions (helical) follow at residues Ile-201–Cys-213 and Pro-217–Ile-225. 3 helical membrane-spanning segments follow: residues Tyr-237–Val-256, Met-283–Met-311, and Ile-320–Leu-339. The N-linked (GlcNAc...) asparagine glycan is linked to Asn-365. A run of 2 helical transmembrane segments spans residues Leu-388 to Ala-408 and Gly-416 to Leu-439. A Selectivity filter part_3 motif is present at residues Gly-416–Pro-420. Phe-418 is a binding site for chloride. The segment at residues Gly-456–Val-470 is an intramembrane region (helical). Positions Thr-471–His-472 form an intramembrane region, note=Loop between two helices. The segment at residues Ala-473 to Thr-484 is an intramembrane region (helical). Positions Gly-485 to His-489 form an intramembrane region, note=Loop between two helices. The chain crosses the membrane as a helical span at residues Val-490 to Leu-507. The Cytoplasmic segment spans residues Gln-508–Lys-805. Tyr-512 serves as a coordination point for chloride. A CBS 1 domain is found at Met-543–Ala-601. Disordered stretches follow at residues Pro-606–Phe-625 and Lys-653–Thr-684. Residues Ile-719–Phe-776 form the CBS 2 domain.

This sequence belongs to the chloride channel (TC 2.A.49) family. ClC-0 subfamily. Homodimer. Each subunit contains a channel ('Double barreled channel').

It is found in the membrane. In terms of biological role, voltage-gated chloride channel. This channel is thought to ensure the high conductance of the non-innervated membrane of the electrocyte necessary for efficient current generation caused by sodium influx through the acetylcholine receptor at the innervated membrane. The polypeptide is Chloride channel protein (Torpedo marmorata (Marbled electric ray)).